We begin with the raw amino-acid sequence, 52 residues long: Defensin D2 (52 aa).

Intrachain disulfides connect Cys8–Cys52, Cys19–Cys39, Cys25–Cys46, and Cys29–Cys48.

As to expression, distributed in the epidermal cell layer of leaves and in the subepidermal layer region of stems. Not in roots.

It localises to the secreted. It is found in the cell wall. Antimicrobial peptide. Active against Fusarium spp., Gram-positive and Gram-negative bacterial pathogens. This is Defensin D2 from Spinacia oleracea (Spinach).